The sequence spans 242 residues: Anti-Pycsar protein Apyc1 (242 aa).

The segment at 17 to 216 (FNNNALIEQD…EMQSIIKLMH (200 aa)) is beta-lactamase-like. 7 residues coordinate Zn(2+): histidine 59, histidine 61, aspartate 63, histidine 64, histidine 142, aspartate 162, and histidine 216.

Belongs to the anti-Pycsar protein Apyc1 family. As to quaternary structure, homodimer. Zn(2+) is required as a cofactor.

The catalysed reaction is 3',5'-cyclic CMP + H2O = CMP + H(+). The enzyme catalyses 3',5'-cyclic UMP + H2O = UMP + H(+). Functionally, counteracts the endogenous Pycsar antiviral defense system. Phosphodiesterase that enables metal-dependent hydrolysis of host cyclic nucleotide Pycsar defense signals such as cCMP and cUMP. This is Anti-Pycsar protein Apyc1 from Saccharibacillus brassicae.